The following is an 828-amino-acid chain: Periplasmic nitrate reductase (828 aa).

Positions 1–31 (MKLSRRSFMKANAVAAAAAAAGLSVPGVARA) form a signal peptide, tat-type signal. The region spanning 39 to 95 (IKWDKAPCRFCGTGCGVLVGTQQGRVVACQGDPDAPVNRGLNCIKGYFLPKIMYGKD) is the 4Fe-4S Mo/W bis-MGD-type domain. Residues cysteine 46, cysteine 49, cysteine 53, and cysteine 81 each coordinate [4Fe-4S] cluster. Residues lysine 83, glutamine 150, asparagine 175, cysteine 179, 212–219 (WGSNMAEM), 243–247 (STFQH), 262–264 (QSD), methionine 372, glutamine 376, asparagine 482, 508–509 (SD), lysine 531, aspartate 558, and 718–727 (TGRVLEHWHT) contribute to the Mo-bis(molybdopterin guanine dinucleotide) site. Phenylalanine 794 is a binding site for substrate. Positions 802 and 819 each coordinate Mo-bis(molybdopterin guanine dinucleotide).

This sequence belongs to the prokaryotic molybdopterin-containing oxidoreductase family. NasA/NapA/NarB subfamily. Component of the periplasmic nitrate reductase NapAB complex composed of NapA and NapB. [4Fe-4S] cluster serves as cofactor. It depends on Mo-bis(molybdopterin guanine dinucleotide) as a cofactor. Predicted to be exported by the Tat system. The position of the signal peptide cleavage has not been experimentally proven.

It localises to the periplasm. The enzyme catalyses 2 Fe(II)-[cytochrome] + nitrate + 2 H(+) = 2 Fe(III)-[cytochrome] + nitrite + H2O. Functionally, catalytic subunit of the periplasmic nitrate reductase complex NapAB. Receives electrons from NapB and catalyzes the reduction of nitrate to nitrite. The sequence is that of Periplasmic nitrate reductase from Salmonella paratyphi A (strain ATCC 9150 / SARB42).